Consider the following 492-residue polypeptide: UTP--glucose-1-phosphate uridylyltransferase (492 aa).

UTP-binding positions include 110–113, Lys124, Gln183, and Gly210; that span reads LNGG. 112–113 contacts substrate; the sequence is GG. Residue Lys124 coordinates Mg(2+). Residues His211 and 239 to 241 each bind substrate; that span reads NID. 2 residues coordinate UTP: Asp241 and Lys379. Residue Asp241 coordinates Mg(2+). Residue Lys379 is part of the active site. Residues 441–492 are oligomerization; it reads VLTVSGNVLFGKNVVLKGTVIILADEKSKICVPDGSVLEDNIIYGNLPIIDH.

The protein belongs to the UDPGP type 1 family. Homooctamer.

It carries out the reaction alpha-D-glucose 1-phosphate + UTP + H(+) = UDP-alpha-D-glucose + diphosphate. In terms of biological role, plays a central role as a glucosyl donor in cellular metabolic pathways. In Encephalitozoon cuniculi (strain GB-M1) (Microsporidian parasite), this protein is UTP--glucose-1-phosphate uridylyltransferase (UGP1).